Reading from the N-terminus, the 33-residue chain is Potassium channel toxin alpha-KTx 10.4 (33 aa).

3 cysteine pairs are disulfide-bonded: cysteine 3–cysteine 22, cysteine 8–cysteine 27, and cysteine 12–cysteine 29.

It belongs to the short scorpion toxin superfamily. Potassium channel inhibitor family. Alpha-KTx 10 subfamily. As to expression, expressed by the venom gland.

The protein resides in the secreted. Blocks human voltage-gated potassium channel Kv1.2/KCNA2 (IC(50)=3.6 nM) and Kv1.3/KCNA3 (IC(50)=72 nM). The polypeptide is Potassium channel toxin alpha-KTx 10.4 (Centruroides tecomanus (Scorpion)).